The primary structure comprises 83 residues: Cell division topological specificity factor (83 aa).

The protein belongs to the MinE family.

Functionally, prevents the cell division inhibition by proteins MinC and MinD at internal division sites while permitting inhibition at polar sites. This ensures cell division at the proper site by restricting the formation of a division septum at the midpoint of the long axis of the cell. In Buchnera aphidicola subsp. Acyrthosiphon pisum (strain 5A), this protein is Cell division topological specificity factor.